The chain runs to 152 residues: Keratin, high-sulfur matrix protein, B2C (152 aa).

An N-acetylalanine modification is found at alanine 2. 3 repeats span residues 27 to 36 (STCSQTSCCQ), 37 to 46 (PTSIQTSCCQ), and 47 to 56 (PTCLQTSGCE).

Its function is as follows. The keratin products of mammalian epidermal derivatives such as wool and hair consist of microfibrils embedded in a rigid matrix of other proteins. The matrix proteins include the high-sulfur and high-tyrosine keratins, having molecular weights of 6-20 kDa, whereas the microfibrils contain the larger, low-sulfur keratins (40-56 kDa). In Ovis aries (Sheep), this protein is Keratin, high-sulfur matrix protein, B2C.